A 242-amino-acid chain; its full sequence is Type III pantothenate kinase (242 aa).

Asp7–Lys14 provides a ligand contact to ATP. Substrate is bound by residues Tyr91 and Gly98–Arg101. Catalysis depends on Asp100, which acts as the Proton acceptor. Thr121 is an ATP binding site. Residue Thr171 participates in substrate binding.

Belongs to the type III pantothenate kinase family. As to quaternary structure, homodimer. NH4(+) serves as cofactor. It depends on K(+) as a cofactor.

It localises to the cytoplasm. It carries out the reaction (R)-pantothenate + ATP = (R)-4'-phosphopantothenate + ADP + H(+). Its pathway is cofactor biosynthesis; coenzyme A biosynthesis; CoA from (R)-pantothenate: step 1/5. Catalyzes the phosphorylation of pantothenate (Pan), the first step in CoA biosynthesis. This is Type III pantothenate kinase from Xanthomonas campestris pv. campestris (strain 8004).